Consider the following 207-residue polypeptide: ATP phosphoribosyltransferase (207 aa).

The protein belongs to the ATP phosphoribosyltransferase family. Short subfamily. In terms of assembly, heteromultimer composed of HisG and HisZ subunits.

The protein resides in the cytoplasm. It catalyses the reaction 1-(5-phospho-beta-D-ribosyl)-ATP + diphosphate = 5-phospho-alpha-D-ribose 1-diphosphate + ATP. Its pathway is amino-acid biosynthesis; L-histidine biosynthesis; L-histidine from 5-phospho-alpha-D-ribose 1-diphosphate: step 1/9. Catalyzes the condensation of ATP and 5-phosphoribose 1-diphosphate to form N'-(5'-phosphoribosyl)-ATP (PR-ATP). Has a crucial role in the pathway because the rate of histidine biosynthesis seems to be controlled primarily by regulation of HisG enzymatic activity. This is ATP phosphoribosyltransferase from Geobacillus kaustophilus (strain HTA426).